The following is a 405-amino-acid chain: Corticosteroid-binding globulin (405 aa).

Positions 1–22 (MPLLLYTCLLWLSTSGLWTVQA) are cleaved as a signal peptide. N-linked (GlcNAc...) asparagine glycosylation is found at Asn26, Asn31, Asn96, and Asn260. Asn286 contributes to the cortisol binding site. N-linked (GlcNAc...) asparagine glycosylation is found at Asn330 and Asn369. Trp393 contacts cortisol.

Belongs to the serpin family. As to expression, expressed by the liver; secreted in plasma.

It is found in the secreted. Major transport protein for glucocorticoids and progestins in the blood of almost all vertebrate species. This is Corticosteroid-binding globulin (SERPINA6) from Pongo abelii (Sumatran orangutan).